We begin with the raw amino-acid sequence, 382 residues long: uncharacterized protein (382 aa).

12 consecutive transmembrane segments (helical) span residues 8 to 28, 45 to 65, 75 to 95, 102 to 122, 131 to 151, 157 to 177, 204 to 224, 231 to 251, 270 to 290, 291 to 311, 325 to 345, and 349 to 369; these read VMLL…LNTL, MVSS…GYLI, YLAS…VGFW, FIAG…LMCS, LLAA…LLVS, LLHV…PLLF, LGVN…GLMP, GMAN…GILG, VQVF…AMAP, ALFI…AWAC, ALLL…AMLM, and SDNL…LMLL.

It belongs to the major facilitator superfamily. YcaD (TC 2.A.1.26) family.

The protein resides in the cell inner membrane. This is an uncharacterized protein from Salmonella dublin (strain CT_02021853).